Here is an 896-residue protein sequence, read N- to C-terminus: Alanine--tRNA ligase (896 aa).

Residues 439-456 are compositionally biased toward basic and acidic residues; sequence QRAKDDAKAKKGQHRDAS. A disordered region spans residues 439 to 459; sequence QRAKDDAKAKKGQHRDASAYR. Positions 579, 583, 681, and 685 each coordinate Zn(2+).

The protein belongs to the class-II aminoacyl-tRNA synthetase family. Zn(2+) serves as cofactor.

The protein localises to the cytoplasm. It catalyses the reaction tRNA(Ala) + L-alanine + ATP = L-alanyl-tRNA(Ala) + AMP + diphosphate. In terms of biological role, catalyzes the attachment of alanine to tRNA(Ala) in a two-step reaction: alanine is first activated by ATP to form Ala-AMP and then transferred to the acceptor end of tRNA(Ala). Also edits incorrectly charged Ser-tRNA(Ala) and Gly-tRNA(Ala) via its editing domain. This chain is Alanine--tRNA ligase, found in Nocardioides sp. (strain ATCC BAA-499 / JS614).